The sequence spans 1427 residues: Coiled-coil domain-containing protein 144A (1427 aa).

Residues 1–11 (MASWGGEKRGG) are compositionally biased toward basic and acidic residues. 5 disordered regions span residues 1 to 32 (MASWGGEKRGGAEGSPKPAVYATRKTPSVGSQ), 87 to 189 (AARS…LTER), 213 to 261 (LPEN…CDRE), 453 to 485 (NMNQNSDSGSTNNYKSLKPKLENLSSLPPDSDR), and 528 to 586 (EEEM…EVKN). Polar residues-rich tracts occupy residues 129–150 (PESLPQNNNPDWHPTNLTLSDE) and 167–178 (VSPSMPENQSAT). Over residues 224 to 234 (QDSELTSEEEQ) the composition is skewed to acidic residues. A compositionally biased stretch (polar residues) spans 453 to 467 (NMNQNSDSGSTNNYK). A coiled-coil region spans residues 490–545 (YLHEELQQDMQKFKNEVNTLEEEFLALKKEDVQLHKDVEEEMEKHRSNSTELSGTL). A compositionally biased stretch (basic and acidic residues) spans 528-537 (EEEMEKHRSN). Residues 543–552 (GTLTDGTTVG) show a composition bias toward low complexity. The span at 563–584 (PRKENGEHDRPADKTSNEKNEV) shows a compositional bias: basic and acidic residues. 2 coiled-coil regions span residues 648 to 1129 (LLKL…DLTE) and 1155 to 1309 (FSMK…TQLT).

Belongs to the CCDC144 family.

In terms of biological role, may play a role in preventing the formation of kidney stones through inhibition of calcium oxalate monohydrate (COM) crystallization, attenuating COM-induced apoptotic injury to renal epithelial cells. May exhibit antilithiatic (preventing the formation of kidney stones) activity through crystal binding, hindering the crystal attachment to renal epithelial cells, a pre-requisite to initiate inflammatory response. This chain is Coiled-coil domain-containing protein 144A (CCDC144A), found in Homo sapiens (Human).